Reading from the N-terminus, the 404-residue chain is Multidrug resistance protein MdtG (404 aa).

11 helical membrane passes run 19–39 (LGCFLTGAAFSLVMPFLPLYV), 56–76 (LVFSITFLFSAIASPFWGGLA), 90–110 (LGMAIVMLLMGMAQNIWQFLI), 113–133 (ALLGLLGGFIPNANALIATQV), 149–169 (GVSGALLGPLAGGLLAGHYGL), 171–191 (PVFFITASVLFICFLLTFFFI), 222–242 (LFVTTLIIQVATGSIAPILTL), 254–274 (IAFISGMIASVPGVAALLSAP), 288–308 (ILIVALIISVLLLIPMSFVQT), 317–337 (FLLGAADGALLPAVQTLLVYN), and 376–396 (AVFCVTAGVVLFNAIYSWNSL).

It belongs to the major facilitator superfamily. DHA1 family. MdtG (TC 2.A.1.2.20) subfamily.

It is found in the cell inner membrane. In Salmonella paratyphi C (strain RKS4594), this protein is Multidrug resistance protein MdtG.